We begin with the raw amino-acid sequence, 169 residues long: HTH-type transcriptional regulator PchR (169 aa).

In terms of domain architecture, HTH marR-type spans 10 to 153 (YDIYVRLLHL…VLKFLEQLTS (144 aa)). The H-T-H motif DNA-binding region spans 64 to 87 (NAGIARKMNLSKANVTKISTKLIK).

As to quaternary structure, homodimer.

Represses the expression of the yvmC-cypX operon, which is involved in pulcherriminic acid biosynthesis. Also negatively regulates yvmA, yvnB and its own expression. Positively regulates yisI expression. Acts by binding specifically to a 14-bp palindromic motif, the YvmB box, which is present in the promoter region of the target genes. In Bacillus subtilis (strain 168), this protein is HTH-type transcriptional regulator PchR.